The following is a 260-amino-acid chain: Hydroxyethylthiazole kinase 1 (260 aa).

Methionine 39 serves as a coordination point for substrate. ATP-binding residues include arginine 115 and threonine 160. Glycine 187 is a substrate binding site.

The protein belongs to the Thz kinase family. Requires Mg(2+) as cofactor.

The enzyme catalyses 5-(2-hydroxyethyl)-4-methylthiazole + ATP = 4-methyl-5-(2-phosphooxyethyl)-thiazole + ADP + H(+). The protein operates within cofactor biosynthesis; thiamine diphosphate biosynthesis; 4-methyl-5-(2-phosphoethyl)-thiazole from 5-(2-hydroxyethyl)-4-methylthiazole: step 1/1. Catalyzes the phosphorylation of the hydroxyl group of 4-methyl-5-beta-hydroxyethylthiazole (THZ). In Streptococcus pneumoniae serotype 4 (strain ATCC BAA-334 / TIGR4), this protein is Hydroxyethylthiazole kinase 1.